Here is a 106-residue protein sequence, read N- to C-terminus: Thioredoxin (106 aa).

Residues 2 to 106 enclose the Thioredoxin domain; it reads VNFLKTKADF…GLREKIKKNK (105 aa). Residues C32 and C35 each act as nucleophile in the active site. A disulfide bond links C32 and C35.

This sequence belongs to the thioredoxin family.

It is found in the cytoplasm. Participates in various redox reactions through the reversible oxidation of its active center dithiol to a disulfide and catalyzes dithiol-disulfide exchange reactions. This is Thioredoxin (THIO) from Geodia cydonium (Sponge).